Consider the following 149-residue polypeptide: Deoxyuridine 5'-triphosphate nucleotidohydrolase (149 aa).

Residues 68 to 70 (RSG), N81, 85 to 87 (LID), and M95 each bind substrate.

It belongs to the dUTPase family. The cofactor is Mg(2+).

It catalyses the reaction dUTP + H2O = dUMP + diphosphate + H(+). It functions in the pathway pyrimidine metabolism; dUMP biosynthesis; dUMP from dCTP (dUTP route): step 2/2. Functionally, this enzyme is involved in nucleotide metabolism: it produces dUMP, the immediate precursor of thymidine nucleotides and it decreases the intracellular concentration of dUTP so that uracil cannot be incorporated into DNA. The polypeptide is Deoxyuridine 5'-triphosphate nucleotidohydrolase (Herminiimonas arsenicoxydans).